Reading from the N-terminus, the 232-residue chain is Triggering receptor expressed on myeloid cells 1 (232 aa).

An N-terminal signal peptide occupies residues 1–20 (MRKAGVWGLLWMLFIEEIQA). The region spanning 21-125 (AAEVFEEKCT…DPIILFHPVR (105 aa)) is the Ig-like V-type domain. Topologically, residues 21–203 (AAEVFEEKCT…THVNRAPGIS (183 aa)) are extracellular. A disulfide bridge connects residues Cys41 and Cys109. Positions 152-186 (PLPVTTKLRPRPRPRPKPVTQPIPTSADRLSSPGF) are disordered. Asn192 carries an N-linked (GlcNAc...) asparagine glycan. The helical transmembrane segment at 204 to 224 (IIIPAACGLLSKTLVFIGLFA) threads the bilayer. At 225-232 (VTHRSFAS) the chain is on the cytoplasmic side.

Monomer. Homomultimer; when activated. Interacts with TYROBP/DAP12. Interacts with TLR4. Detected in bone marrow, tongue, lung, liver, thymus, spleen, jejunum, ileum and lymph nodes.

It localises to the cell membrane. Functionally, cell surface receptor that plays important roles in innate and adaptive immunity by amplifying inflammatory responses. Upon activation by various ligands such as PGLYRP1, HMGB1 or HSP70, multimerizes and forms a complex with transmembrane adapter TYROBP/DAP12. In turn, initiates a SYK-mediated cascade of tyrosine phosphorylation, activating multiple downstream mediators such as BTK, MAPK1, MAPK3 or phospholipase C-gamma. This cascade promotes the neutrophil- and macrophage-mediated release of pro-inflammatory cytokines and/or chemokines, as well as their migration and thereby amplifies inflammatory responses that are triggered by bacterial and fungal infections. By also promoting the amplification of inflammatory signals that are initially triggered by Toll-like receptor (TLR) and NOD-like receptor engagement, plays a major role in the pathophysiology of acute and chronic inflammatory diseases of different etiologies including septic shock and atherosclerosis. This Bos taurus (Bovine) protein is Triggering receptor expressed on myeloid cells 1 (TREM1).